A 190-amino-acid chain; its full sequence is Ribosome maturation factor RimM (190 aa).

Residues 95–171 form the PRC barrel domain; that stretch reads DPDEFYDHEL…VVMIEPPEGL (77 aa). A disordered region spans residues 169 to 190; it reads EGLLDPDFGDKSNSDNSNSDND.

The protein belongs to the RimM family. Binds ribosomal protein uS19.

It localises to the cytoplasm. An accessory protein needed during the final step in the assembly of 30S ribosomal subunit, possibly for assembly of the head region. Essential for efficient processing of 16S rRNA. May be needed both before and after RbfA during the maturation of 16S rRNA. It has affinity for free ribosomal 30S subunits but not for 70S ribosomes. This is Ribosome maturation factor RimM from Rhodococcus erythropolis (strain PR4 / NBRC 100887).